The following is a 1101-amino-acid chain: Rho GTPase-activating protein 30 (1101 aa).

In terms of domain architecture, Rho-GAP spans 20-215 (CDLQEHLQHS…FILTHVDQLF (196 aa)). Disordered regions lie at residues 224 to 243 (EVESGWRSLPGTRASGSPED), 300 to 400 (HETK…RAGG), and 451 to 529 (ALQH…AEDG). Positions 308 to 318 (RGAEDREDKSN) are enriched in basic and acidic residues. Residues 360-376 (LENDSIEAAEGEQEPEA) show a composition bias toward acidic residues. Over residues 459–472 (ASGPGPGPGLGPGP) the composition is skewed to pro residues. A compositionally biased stretch (low complexity) spans 508-520 (DSFSFLEDSSSSE). The residue at position 576 (Ser-576) is a Phosphoserine. 2 disordered regions span residues 621-906 (GPKP…QPSP) and 965-991 (CPRPGRLDGTPGERAWGSRASRSSWRN). 4 stretches are compositionally biased toward basic and acidic residues: residues 658 to 694 (GEDKQAEPGGRLDIREEAEGSPETKVEAGKASEDRGE), 701 to 735 (TKVRLREGSREETEAKEEKSKGQKKADSMEAKGVE), 759 to 770 (EEAQVEAGRDLE), and 779 to 822 (AEEK…DSRS). Positions 976 to 991 (GERAWGSRASRSSWRN) are enriched in low complexity. The residue at position 996 (Ser-996) is a Phosphoserine. Residues 1050 to 1101 (LELPSEGAEGSGSRSRLSLPPREPQVPDPLLSSQRRSYAFETQANPGKGEGL) form a disordered region. A compositionally biased stretch (low complexity) spans 1053-1069 (PSEGAEGSGSRSRLSLP). The span at 1080–1094 (LSSQRRSYAFETQAN) shows a compositional bias: polar residues.

In terms of assembly, interacts with RHOU in a GTP-independent manner.

The protein resides in the cytoplasmic vesicle. Its function is as follows. GTPase-activating protein (GAP) for RAC1 and RHOA, but not for CDC42. In Homo sapiens (Human), this protein is Rho GTPase-activating protein 30 (ARHGAP30).